A 551-amino-acid polypeptide reads, in one-letter code: GMP synthase [glutamine-hydrolyzing] (551 aa).

The disordered stretch occupies residues M1 to A28. Positions V19–A28 are enriched in polar residues. The Glutamine amidotransferase type-1 domain maps to M37–E227. C114 (nucleophile) is an active-site residue. Catalysis depends on residues H201 and E203. The GMPS ATP-PPase domain maps to W228–R426. S255 to S261 serves as a coordination point for ATP.

In terms of assembly, homodimer.

It catalyses the reaction XMP + L-glutamine + ATP + H2O = GMP + L-glutamate + AMP + diphosphate + 2 H(+). It functions in the pathway purine metabolism; GMP biosynthesis; GMP from XMP (L-Gln route): step 1/1. In terms of biological role, catalyzes the synthesis of GMP from XMP. This Gloeobacter violaceus (strain ATCC 29082 / PCC 7421) protein is GMP synthase [glutamine-hydrolyzing].